Here is an 866-residue protein sequence, read N- to C-terminus: E3 ubiquitin-protein ligase RNF216 (866 aa).

3 disordered regions span residues 46 to 117 (LVTP…NPRS), 131 to 161 (YTESDPLETQNQSSEDSETELLSNLGESAAL), and 211 to 240 (EFPGPAFPRPEPQQGGISGPSSPQPAHPLG). Residues 55–76 (EEEDLDDDVILTEDDSEDDYGE) show a composition bias toward acidic residues. Residues leucine 80, threonine 89, and lysine 100 each participate in a glycyl lysine isopeptide (Lys-Gly) (interchain with G-Cter in SUMO2) cross-link. The span at 137–156 (LETQNQSSEDSETELLSNLG) shows a compositional bias: polar residues. Glycyl lysine isopeptide (Lys-Gly) (interchain with G-Cter in SUMO2) cross-links involve residues lysine 351 and lysine 354. A Phosphoserine modification is found at serine 419. Residues lysine 425, lysine 430, lysine 448, lysine 459, and lysine 485 each participate in a glycyl lysine isopeptide (Lys-Gly) (interchain with G-Cter in SUMO2) cross-link. A coiled-coil region spans residues 475–491 (VQQEQEFYEQKIKEMAE). Positions 511 to 728 (QLIECRCCYG…SPGAPCQECS (218 aa)) are TRIAD supradomain. 6 residues coordinate Zn(2+): cysteine 515, cysteine 518, cysteine 537, cysteine 540, cysteine 605, and cysteine 608. Residues 515 to 564 (CRCCYGEFPFEELTQCADAHLFCKECLIRYAQEAVFGSGKLELSCMEGSC) form an RING-type 1 zinc finger. The segment at 583–648 (YKYYERKAEE…LWKEHNGLTC (66 aa)) adopts an IBR-type zinc-finger fold. Residue lysine 619 forms a Glycyl lysine isopeptide (Lys-Gly) (interchain with G-Cter in SUMO2) linkage. 6 residues coordinate Zn(2+): cysteine 623, cysteine 628, cysteine 633, cysteine 636, histidine 643, and cysteine 648. Glycyl lysine isopeptide (Lys-Gly) (interchain with G-Cter in SUMO2) cross-links involve residues lysine 658 and lysine 666. Residues cysteine 675 and cysteine 678 each coordinate Zn(2+). The RING-type 2; atypical zinc-finger motif lies at 675-703 (CHKCGTGLIKSEGCNRMSCRCGAQMCYLC). Residue cysteine 688 is part of the active site. Zn(2+) contacts are provided by cysteine 693, cysteine 695, cysteine 700, cysteine 703, and histidine 716. Serine 719 carries the phosphoserine; by MAPK1 modification. Cysteine 724 is a binding site for Zn(2+). A coiled-coil region spans residues 737–763 (TEDDEKLIEEIQKEAEEEQKRKNGENT). Residues lysine 765 and lysine 773 each participate in a glycyl lysine isopeptide (Lys-Gly) (interchain with G-Cter in SUMO2) cross-link.

In terms of assembly, interacts with UBE2L3 and to some extent with UBE2L6. Interacts with TRAF3, TLR3, TLR4, TLR5 and TLR9. Isoform 3/ZIN binds RIPK1. (Microbial infection) Isoform 3/ZIN binds RIPK1 and HIV Vif. In terms of processing, auto-ubiquitinated. Post-translationally, phosphorylation at Ser-719 enhances acceptor ubiquitin binding and chain-type specificity towards 'Lys-63' di-ubiquitin but not di-ubiquitin with other linkage types. As to expression, ubiquitous, with the highest levels of expression in testis and peripheral blood leukocytes.

It localises to the cytoplasm. Its subcellular location is the cytoplasmic vesicle. The protein localises to the clathrin-coated vesicle. It carries out the reaction S-ubiquitinyl-[E2 ubiquitin-conjugating enzyme]-L-cysteine + [acceptor protein]-L-lysine = [E2 ubiquitin-conjugating enzyme]-L-cysteine + N(6)-ubiquitinyl-[acceptor protein]-L-lysine.. The protein operates within protein modification; protein ubiquitination. Its activity is regulated as follows. Allosterically activated by 'Lys-63'-linked di-ubiquitin. In terms of biological role, E3 ubiquitin ligase which accepts ubiquitin from specific E2 ubiquitin-conjugating enzymes, and then transfers it to substrates promoting their ubiquitination. Plays a role in the regulation of antiviral responses by promoting the degradation of TRAF3, TLR4 and TLR9. In turn, down-regulates NF-kappa-B and IRF3 activation as well as beta interferon production. Also participates in the regulation of autophagy by ubiquitinating BECN1 leading to its degradation and autophagy inhibition. Plays a role in ARC-dependent synaptic plasticity by mediating ARC ubiquitination resulting in its rapid proteasomal degradation. Plays aso an essential role in spermatogenesis and male fertility. Mechanistically, regulates meiosis by promoting the degradation of PRKACB through the ubiquitin-mediated lysosome pathway. Modulates the gonadotropin-releasing hormone signal pathway by affecting the stability of STAU2 that is required for the microtubule-dependent transport of neuronal RNA from the cell body to the dendrite. Inhibits TNF and IL-1 mediated activation of NF-kappa-B. Promotes TNF and RIP mediated apoptosis. The chain is E3 ubiquitin-protein ligase RNF216 (RNF216) from Homo sapiens (Human).